The primary structure comprises 1644 residues: Terminal uridylyltransferase 4 (1644 aa).

Disordered regions lie at residues 30–60 (SNQT…KQND) and 75–277 (AASV…EMDY). At Ser-102 the chain carries Phosphoserine. Polar residues predominate over residues 108-123 (KGSSQTKLEKTPSLQT). Ser-131 carries the post-translational modification Phosphoserine. Polar residues-rich tracts occupy residues 146 to 156 (AEATTEKALNS) and 163 to 174 (TPTSQMKLQKTP). Ser-176 is subject to Phosphoserine. Composition is skewed to polar residues over residues 194 to 209 (QTES…SSFV) and 226 to 242 (LENS…TDNI). Over residues 258–272 (DLSKMKSEESNKENS) the composition is skewed to basic and acidic residues. Residues 273–353 (SEMDYLENAT…KEKRHKKNIL (81 aa)) are required for interaction with LIN28A and pre-let-7 RNA. Zn(2+)-binding residues include Cys-326, Cys-329, His-342, and His-348. Basic and acidic residues predominate over residues 603 to 623 (IADENKAKADEPKDDTKKTET). A disordered region spans residues 603–640 (IADENKAKADEPKDDTKKTETDNQSNAAKAKHGKSPLT). The 50-residue stretch at 649–698 (LGQLWLELLKFYTLDFALEEYVICVRIQDILTRENKNWPKRRIAIEDPFS) folds into the PAP-associated 1 domain. Disordered stretches follow at residues 733 to 759 (KGGN…VKSD) and 812 to 841 (HGQD…DLTP). Positions 745-755 (KEKGKLSSKKP) are enriched in basic residues. Low complexity predominate over residues 815 to 827 (DSSSLSTASGGSD). Residues 828 to 837 (LKQKSAEKQG) are compositionally biased toward basic and acidic residues. The segment at 918–1634 (DKFILTSGKP…CATRRCRERC (717 aa)) is sufficient for monouridylation activity. The CCHC-type 1 zinc finger occupies 930–947 (IVCSICKKDGHSKNDCPE). UTP is bound by residues 1015–1018 (SSKN), 1025–1028 (SDLD), Asn-1098, Lys-1120, 1138–1142 (SYAYI), and His-1254. 2 residues coordinate Mg(2+): Asp-1026 and Asp-1028. A PAP-associated 2 domain is found at 1201 to 1254 (SLGELWLGLLRFYTEEFDFKEYVISIRQKKLLTTFEKQWTSKCIAIEDPFDLNH). Residues 1310–1327 (RCCRVCGKIGHYMKDCPK) form a CCHC-type 2 zinc finger. The tract at residues 1329 to 1350 (KRLKKKDSEEEKEGNEEEKDSR) is disordered. A CCHC-type 3 zinc finger spans residues 1358–1375 (LRCFICGDAGHVRRECPE). The span at 1402–1427 (AGSAQQQSDQSIRTRQSSECSDSPSY) shows a compositional bias: low complexity. Positions 1402 to 1483 (AGSAQQQSDQ…LYNFPQSPPA (82 aa)) are disordered. A compositionally biased stretch (pro residues) spans 1428–1450 (SPQPQPFPQNSPQPSALPPPPSQ). Low complexity predominate over residues 1451 to 1473 (PGSQPKLGPPQQGGQPPHQVQMP). Omega-N-methylarginine is present on Arg-1624.

The protein belongs to the DNA polymerase type-B-like family. As to quaternary structure, interacts with LIN28A in the presence of pre-let-7 RNA. Interacts with T2BP. Interacts with MOV10; the interaction is RNA-dependent. It depends on Mg(2+) as a cofactor. Mn(2+) is required as a cofactor. As to expression, ubiquitously expressed.

It localises to the nucleus. It is found in the cytoplasm. Its subcellular location is the cytoplasmic ribonucleoprotein granule. The enzyme catalyses RNA(n) + UTP = RNA(n)-3'-uridine ribonucleotide + diphosphate. Functionally, uridylyltransferase that mediates the terminal uridylation of mRNAs with short (less than 25 nucleotides) poly(A) tails, hence facilitating global mRNA decay. Essential for both oocyte maturation and fertility. Through 3' terminal uridylation of mRNA, sculpts, with TUT7, the maternal transcriptome by eliminating transcripts during oocyte growth. Involved in microRNA (miRNA)-induced gene silencing through uridylation of deadenylated miRNA targets. Also functions as an integral regulator of microRNA biogenesiS using 3 different uridylation mechanisms. Acts as a suppressor of miRNA biogenesis by mediating the terminal uridylation of some miRNA precursors, including that of let-7 (pre-let-7), miR107, miR-143 and miR-200c. Uridylated miRNAs are not processed by Dicer and undergo degradation. Degradation of pre-let-7 contributes to the maintenance of embryonic stem (ES) cell pluripotency. Also catalyzes the 3' uridylation of miR-26A, a miRNA that targets IL6 transcript. This abrogates the silencing of IL6 transcript, hence promoting cytokine expression. In the absence of LIN28A, TUT7 and TUT4 monouridylate group II pre-miRNAs, which includes most of pre-let7 members, that shapes an optimal 3' end overhang for efficient processing. Add oligo-U tails to truncated pre-miRNAS with a 5' overhang which may promote rapid degradation of non-functional pre-miRNA species. May also suppress Toll-like receptor-induced NF-kappa-B activation via binding to T2BP. Does not play a role in replication-dependent histone mRNA degradation. Due to functional redundancy between TUT4 and TUT7, the identification of the specific role of each of these proteins is difficult. TUT4 and TUT7 restrict retrotransposition of long interspersed element-1 (LINE-1) in cooperation with MOV10 counteracting the RNA chaperonne activity of L1RE1. TUT7 uridylates LINE-1 mRNAs in the cytoplasm which inhibits initiation of reverse transcription once in the nucleus, whereas uridylation by TUT4 destabilizes mRNAs in cytoplasmic ribonucleoprotein granules. The chain is Terminal uridylyltransferase 4 from Mus musculus (Mouse).